We begin with the raw amino-acid sequence, 205 residues long: Dephospho-CoA kinase (205 aa).

The DPCK domain maps to 5-201; the sequence is VVGLTGGIGS…QRYLQLSGNH (197 aa). Position 13 to 18 (13 to 18) interacts with ATP; it reads GSGKTT.

It belongs to the CoaE family.

Its subcellular location is the cytoplasm. It carries out the reaction 3'-dephospho-CoA + ATP = ADP + CoA + H(+). It functions in the pathway cofactor biosynthesis; coenzyme A biosynthesis; CoA from (R)-pantothenate: step 5/5. Catalyzes the phosphorylation of the 3'-hydroxyl group of dephosphocoenzyme A to form coenzyme A. The protein is Dephospho-CoA kinase of Shewanella oneidensis (strain ATCC 700550 / JCM 31522 / CIP 106686 / LMG 19005 / NCIMB 14063 / MR-1).